We begin with the raw amino-acid sequence, 311 residues long: MTETPIRIATRQSPLALWQANYVKDALMAAHPGLQVELVTMVTRGDVILDTPLAKVGGKGLFVKELEIAMLEGRADLAVHSMKDVPVDFPDGLGLVTICEREDPRDAFVSNTYAKIEDLPSGAIVGTCSLRRQCQLKAARPDLVIKELRGNVGTRLSKLDAGEYDAIILAAAGLKRLELESRIRSFIEPEQSLPAVGQGAVGIECRVNDQRVRALLAPLNHADTADRVRCERAMNLTLQGGCQVPIGSYALLEGDTIWLRALVGEPDGSQIVRGEIRGPRTQAEQLGITLAEQLLSQGAKEILERLYCDHE.

An S-(dipyrrolylmethanemethyl)cysteine modification is found at Cys242.

Belongs to the HMBS family. Monomer. Dipyrromethane is required as a cofactor.

The enzyme catalyses 4 porphobilinogen + H2O = hydroxymethylbilane + 4 NH4(+). The protein operates within porphyrin-containing compound metabolism; protoporphyrin-IX biosynthesis; coproporphyrinogen-III from 5-aminolevulinate: step 2/4. Its function is as follows. Tetrapolymerization of the monopyrrole PBG into the hydroxymethylbilane pre-uroporphyrinogen in several discrete steps. This is Porphobilinogen deaminase (hemC) from Vibrio cholerae serotype O1 (strain ATCC 39315 / El Tor Inaba N16961).